The primary structure comprises 144 residues: Large ribosomal subunit protein uL11 (144 aa).

It belongs to the universal ribosomal protein uL11 family. As to quaternary structure, part of the ribosomal stalk of the 50S ribosomal subunit. Interacts with L10 and the large rRNA to form the base of the stalk. L10 forms an elongated spine to which L12 dimers bind in a sequential fashion forming a multimeric L10(L12)X complex. In terms of processing, one or more lysine residues are methylated.

In terms of biological role, forms part of the ribosomal stalk which helps the ribosome interact with GTP-bound translation factors. The sequence is that of Large ribosomal subunit protein uL11 from Frankia alni (strain DSM 45986 / CECT 9034 / ACN14a).